Here is a 371-residue protein sequence, read N- to C-terminus: Succinyl-diaminopimelate desuccinylase (371 aa).

Residue H68 participates in Zn(2+) binding. Residue D70 is part of the active site. Residue D99 participates in Zn(2+) binding. E130 (proton acceptor) is an active-site residue. Positions 131, 159, and 344 each coordinate Zn(2+).

Belongs to the peptidase M20A family. DapE subfamily. As to quaternary structure, homodimer. Requires Zn(2+) as cofactor. Co(2+) serves as cofactor.

The enzyme catalyses N-succinyl-(2S,6S)-2,6-diaminopimelate + H2O = (2S,6S)-2,6-diaminopimelate + succinate. It participates in amino-acid biosynthesis; L-lysine biosynthesis via DAP pathway; LL-2,6-diaminopimelate from (S)-tetrahydrodipicolinate (succinylase route): step 3/3. Functionally, catalyzes the hydrolysis of N-succinyl-L,L-diaminopimelic acid (SDAP), forming succinate and LL-2,6-diaminopimelate (DAP), an intermediate involved in the bacterial biosynthesis of lysine and meso-diaminopimelic acid, an essential component of bacterial cell walls. The polypeptide is Succinyl-diaminopimelate desuccinylase (Acidiphilium cryptum (strain JF-5)).